Reading from the N-terminus, the 357-residue chain is Quinolinate synthase (357 aa).

Positions 50 and 71 each coordinate iminosuccinate. A [4Fe-4S] cluster-binding site is contributed by cysteine 116. Residues 142-144 and serine 159 each bind iminosuccinate; that span reads YAN. Cysteine 203 is a [4Fe-4S] cluster binding site. Iminosuccinate is bound by residues 229–231 and threonine 246; that span reads HPE. Residue cysteine 300 coordinates [4Fe-4S] cluster.

The protein belongs to the quinolinate synthase family. Type 1 subfamily. The cofactor is [4Fe-4S] cluster.

It is found in the cytoplasm. It catalyses the reaction iminosuccinate + dihydroxyacetone phosphate = quinolinate + phosphate + 2 H2O + H(+). It participates in cofactor biosynthesis; NAD(+) biosynthesis; quinolinate from iminoaspartate: step 1/1. In terms of biological role, catalyzes the condensation of iminoaspartate with dihydroxyacetone phosphate to form quinolinate. The protein is Quinolinate synthase of Shewanella sp. (strain ANA-3).